Reading from the N-terminus, the 233-residue chain is Enolase-phosphatase E1 (233 aa).

Mg(2+) is bound by residues Asp16 and Glu18. Substrate contacts are provided by residues 131 to 132 and Lys167; that span reads SS. Asp193 serves as a coordination point for Mg(2+).

It belongs to the HAD-like hydrolase superfamily. MasA/MtnC family. Monomer. Mg(2+) serves as cofactor.

The protein localises to the cytoplasm. It localises to the nucleus. It catalyses the reaction 5-methylsulfanyl-2,3-dioxopentyl phosphate + H2O = 1,2-dihydroxy-5-(methylsulfanyl)pent-1-en-3-one + phosphate. It functions in the pathway amino-acid biosynthesis; L-methionine biosynthesis via salvage pathway; L-methionine from S-methyl-5-thio-alpha-D-ribose 1-phosphate: step 3/6. The protein operates within amino-acid biosynthesis; L-methionine biosynthesis via salvage pathway; L-methionine from S-methyl-5-thio-alpha-D-ribose 1-phosphate: step 4/6. Functionally, bifunctional enzyme that catalyzes the enolization of 2,3-diketo-5-methylthiopentyl-1-phosphate (DK-MTP-1-P) into the intermediate 2-hydroxy-3-keto-5-methylthiopentenyl-1-phosphate (HK-MTPenyl-1-P), which is then dephosphorylated to form the acireductone 1,2-dihydroxy-3-keto-5-methylthiopentene (DHK-MTPene). The chain is Enolase-phosphatase E1 from Meyerozyma guilliermondii (strain ATCC 6260 / CBS 566 / DSM 6381 / JCM 1539 / NBRC 10279 / NRRL Y-324) (Yeast).